The sequence spans 179 residues: Protein GrpE (179 aa).

The segment at 1–20 is disordered; sequence MSEETKEEIKNEKVDEEVTE.

It belongs to the GrpE family. Homodimer.

It is found in the cytoplasm. Participates actively in the response to hyperosmotic and heat shock by preventing the aggregation of stress-denatured proteins, in association with DnaK and GrpE. It is the nucleotide exchange factor for DnaK and may function as a thermosensor. Unfolded proteins bind initially to DnaJ; upon interaction with the DnaJ-bound protein, DnaK hydrolyzes its bound ATP, resulting in the formation of a stable complex. GrpE releases ADP from DnaK; ATP binding to DnaK triggers the release of the substrate protein, thus completing the reaction cycle. Several rounds of ATP-dependent interactions between DnaJ, DnaK and GrpE are required for fully efficient folding. The sequence is that of Protein GrpE from Lactococcus lactis subsp. lactis (strain IL1403) (Streptococcus lactis).